The following is a 213-amino-acid chain: uncharacterized protein (213 aa).

The next 3 helical transmembrane spans lie at 26 to 46 (FINFIRIAIFIVMAWIGGLKV), 112 to 132 (ASYIIGAIIVTVGILTLAGIW), and 136 to 156 (AGLAGGLLTFGMSIVTLSFLI).

The protein resides in the cell membrane. This is an uncharacterized protein from Haemophilus influenzae (strain ATCC 51907 / DSM 11121 / KW20 / Rd).